A 260-amino-acid chain; its full sequence is MAVSAVHLESDAFLVCMNHALSTEKEEVMGLCIGEVDTNRIVHIHSVIILRRSDKRKDRVEISPEQLSSAATEAERLAEMTGRPMRVVGWYHSHPHITVWPSHVDVRTQAMYQMMDQGFVGLIFSCFIEDKNTKTGRVLYTCFQSVQAQKGSEYERIEIPIHVVPHEAIGKVCLESAVELPRILCQEEQDTYRKIHSLTHLDPITKIHNGSVFTKNLCSQMSAVSGPLLQWLEDRLEQNRQSVIELQLEKERLTQELATM.

The MPN domain maps to 6-149 (VHLESDAFLV…YTCFQSVQAQ (144 aa)). Zn(2+) contacts are provided by His92, His94, and Asp105. The JAMM motif motif lies at 92–105 (HSHPHITVWPSHVD).

This sequence belongs to the peptidase M67A family. BRCC36 subfamily. As to quaternary structure, component of the BRCA1-A complex, at least composed of brca1, bard1, uimc1/rap80, abraxas1, brcc3/brcc36, babam2 and babam1/nba1. In the BRCA1-A complex, interacts directly with abraxas1 and babam2. Component of the BRISC complex, at least composed of abraxas2, brcc3/brcc36, babam2 and babam1/nba1. Within the complex, interacts directly with abraxas2. Both the BRCA1-A complex and the BRISC complex bind polyubiquitin. It depends on Zn(2+) as a cofactor.

It localises to the nucleus. It is found in the cytoplasm. Its subcellular location is the cytoskeleton. The protein resides in the spindle pole. Metalloprotease that specifically cleaves 'Lys-63'-linked polyubiquitin chains. Does not have activity toward 'Lys-48'-linked polyubiquitin chains. Component of the BRCA1-A complex, a complex that specifically recognizes 'Lys-63'-linked ubiquitinated histones H2A and H2AX at DNA lesions sites, leading to target the brca1-bard1 heterodimer to sites of DNA damage at double-strand breaks (DSBs). In the BRCA1-A complex, it specifically removes 'Lys-63'-linked ubiquitin on histones H2A and H2AX, antagonizing the rnf8-dependent ubiquitination at double-strand breaks (DSBs). Catalytic subunit of the BRISC complex, a multiprotein complex that specifically cleaves 'Lys-63'-linked ubiquitin in various substrates. Mediates the specific 'Lys-63'-specific deubiquitination associated with the COP9 signalosome complex (CSN), via the interaction of the BRISC complex with the CSN complex. The BRISC complex is required for normal mitotic spindle assembly and microtubule attachment to kinetochores via its role in deubiquitinating numa1. Plays a role in interferon signaling via its role in the deubiquitination of the interferon receptor ifnar1; deubiquitination increases ifnar1 activity by enhancing its stability and cell surface expression. Acts as a regulator of the NLRP3 inflammasome by mediating deubiquitination of nlrp3. Down-regulates the response to bacterial lipopolysaccharide (LPS) via its role in ifnar1 deubiquitination. This chain is Lys-63-specific deubiquitinase BRCC36 (brcc3), found in Salmo salar (Atlantic salmon).